A 416-amino-acid polypeptide reads, in one-letter code: Transmembrane protease serine 11B-like protein (416 aa).

At 1–15 (MYRPVIASRKSIPPW) the chain is on the cytoplasmic side. A helical; Signal-anchor for type II membrane protein membrane pass occupies residues 16 to 36 (LIILCVLGVLAALGIIIGLLV). The Extracellular segment spans residues 37–416 (HFLAVENKIY…RNWIASKTGI (380 aa)). Residues 44–161 (KIYYYQGGFK…GSLKLTEISK (118 aa)) form the SEA domain. The N-linked (GlcNAc...) asparagine glycan is linked to N107. The 231-residue stretch at 185–415 (ITGGSTAHKG…YRNWIASKTG (231 aa)) folds into the Peptidase S1 domain. C210 and C226 are joined by a disulfide. The active-site Charge relay system is H225. N235 carries an N-linked (GlcNAc...) asparagine glycan. D270 serves as the catalytic Charge relay system. 2 cysteine pairs are disulfide-bonded: C335–C351 and C362–C391. S366 functions as the Charge relay system in the catalytic mechanism.

Belongs to the peptidase S1 family. Expressed in esophagus, cervix, tongue, and testes.

It localises to the cell membrane. Inhibited by aprotinin, leupeptin, benzamidine, SERPINA1, SPINT1 and SPINT2. In terms of biological role, serine protease. The chain is Transmembrane protease serine 11B-like protein (Tmprss11b) from Mus musculus (Mouse).